Consider the following 184-residue polypeptide: Isopentenyl-diphosphate Delta-isomerase (184 aa).

His-25 and His-32 together coordinate Mn(2+). A Nudix hydrolase domain is found at 30–164; the sequence is PLHLAFSCWL…PWAFSPWMVL (135 aa). The active site involves Cys-67. Position 69 (His-69) interacts with Mn(2+). A Mg(2+)-binding site is contributed by Glu-87. Mn(2+) contacts are provided by Glu-114 and Glu-116. Residue Glu-116 is part of the active site.

Belongs to the IPP isomerase type 1 family. Homodimer. It depends on Mg(2+) as a cofactor. The cofactor is Mn(2+).

The protein localises to the cytoplasm. It catalyses the reaction isopentenyl diphosphate = dimethylallyl diphosphate. It participates in isoprenoid biosynthesis; dimethylallyl diphosphate biosynthesis; dimethylallyl diphosphate from isopentenyl diphosphate: step 1/1. Its function is as follows. Catalyzes the 1,3-allylic rearrangement of the homoallylic substrate isopentenyl (IPP) to its highly electrophilic allylic isomer, dimethylallyl diphosphate (DMAPP). The polypeptide is Isopentenyl-diphosphate Delta-isomerase (Klebsiella pneumoniae (strain 342)).